The sequence spans 451 residues: Chromosomal replication initiator protein DnaA (451 aa).

Residues 1–73 (MQDNLPQIWE…SNALKQTTSK (73 aa)) are domain I, interacts with DnaA modulators. The domain II stretch occupies residues 73 to 113 (KNFEIRFIVPSEEKISKTEESQKKLEGSVNISVASDQFVSN). The domain III, AAA+ region stretch occupies residues 114–330 (NLNPKYTFDT…GALIRIVAYS (217 aa)). ATP contacts are provided by Gly158, Gly160, Lys161, and Thr162. The interval 331–451 (SLTNSEITVE…ERIAKEIKGD (121 aa)) is domain IV, binds dsDNA.

Belongs to the DnaA family. In terms of assembly, oligomerizes as a right-handed, spiral filament on DNA at oriC.

Its subcellular location is the cytoplasm. In terms of biological role, plays an essential role in the initiation and regulation of chromosomal replication. ATP-DnaA binds to the origin of replication (oriC) to initiate formation of the DNA replication initiation complex once per cell cycle. Binds the DnaA box (a 9 base pair repeat at the origin) and separates the double-stranded (ds)DNA. Forms a right-handed helical filament on oriC DNA; dsDNA binds to the exterior of the filament while single-stranded (ss)DNA is stabiized in the filament's interior. The ATP-DnaA-oriC complex binds and stabilizes one strand of the AT-rich DNA unwinding element (DUE), permitting loading of DNA polymerase. After initiation quickly degrades to an ADP-DnaA complex that is not apt for DNA replication. Binds acidic phospholipids. This is Chromosomal replication initiator protein DnaA from Alkaliphilus oremlandii (strain OhILAs) (Clostridium oremlandii (strain OhILAs)).